The sequence spans 343 residues: S-adenosylmethionine:tRNA ribosyltransferase-isomerase (343 aa).

This sequence belongs to the QueA family. Monomer.

Its subcellular location is the cytoplasm. It catalyses the reaction 7-aminomethyl-7-carbaguanosine(34) in tRNA + S-adenosyl-L-methionine = epoxyqueuosine(34) in tRNA + adenine + L-methionine + 2 H(+). It participates in tRNA modification; tRNA-queuosine biosynthesis. Its function is as follows. Transfers and isomerizes the ribose moiety from AdoMet to the 7-aminomethyl group of 7-deazaguanine (preQ1-tRNA) to give epoxyqueuosine (oQ-tRNA). This Stenotrophomonas maltophilia (strain R551-3) protein is S-adenosylmethionine:tRNA ribosyltransferase-isomerase.